A 312-amino-acid polypeptide reads, in one-letter code: Ribosomal RNA small subunit methyltransferase H (312 aa).

S-adenosyl-L-methionine-binding positions include 33 to 35 (GGY), aspartate 51, phenylalanine 78, aspartate 97, and glutamine 104.

Belongs to the methyltransferase superfamily. RsmH family.

Its subcellular location is the cytoplasm. The enzyme catalyses cytidine(1402) in 16S rRNA + S-adenosyl-L-methionine = N(4)-methylcytidine(1402) in 16S rRNA + S-adenosyl-L-homocysteine + H(+). Its function is as follows. Specifically methylates the N4 position of cytidine in position 1402 (C1402) of 16S rRNA. The polypeptide is Ribosomal RNA small subunit methyltransferase H (Orientia tsutsugamushi (strain Boryong) (Rickettsia tsutsugamushi)).